The sequence spans 396 residues: S-adenosylmethionine synthase (396 aa).

Histidine 16 lines the ATP pocket. Aspartate 18 lines the Mg(2+) pocket. Residue glutamate 44 coordinates K(+). L-methionine contacts are provided by glutamate 57 and glutamine 100. The interval 100–110 (QSPDIAQGVNE) is flexible loop. ATP contacts are provided by residues 175–177 (DAK), 242–243 (RF), aspartate 251, 257–258 (RK), alanine 274, and lysine 278. Aspartate 251 contributes to the L-methionine binding site. Lysine 282 lines the L-methionine pocket.

Belongs to the AdoMet synthase family. Homotetramer; dimer of dimers. Requires Mg(2+) as cofactor. The cofactor is K(+).

It localises to the cytoplasm. It carries out the reaction L-methionine + ATP + H2O = S-adenosyl-L-methionine + phosphate + diphosphate. It participates in amino-acid biosynthesis; S-adenosyl-L-methionine biosynthesis; S-adenosyl-L-methionine from L-methionine: step 1/1. In terms of biological role, catalyzes the formation of S-adenosylmethionine (AdoMet) from methionine and ATP. The overall synthetic reaction is composed of two sequential steps, AdoMet formation and the subsequent tripolyphosphate hydrolysis which occurs prior to release of AdoMet from the enzyme. The chain is S-adenosylmethionine synthase from Streptococcus suis (strain 05ZYH33).